The following is a 778-amino-acid chain: Lon protease (778 aa).

The 195-residue stretch at Leu8–Leu202 folds into the Lon N-terminal domain. Gly354–Thr361 serves as a coordination point for ATP. A Lon proteolytic domain is found at Glu591–Gly772. Active-site residues include Ser678 and Lys721.

Belongs to the peptidase S16 family. As to quaternary structure, homohexamer. Organized in a ring with a central cavity.

The protein resides in the cytoplasm. The enzyme catalyses Hydrolysis of proteins in presence of ATP.. Its function is as follows. ATP-dependent serine protease that mediates the selective degradation of mutant and abnormal proteins as well as certain short-lived regulatory proteins. Required for cellular homeostasis and for survival from DNA damage and developmental changes induced by stress. Degrades polypeptides processively to yield small peptide fragments that are 5 to 10 amino acids long. Binds to DNA in a double-stranded, site-specific manner. This chain is Lon protease, found in Clostridium acetobutylicum (strain ATCC 824 / DSM 792 / JCM 1419 / IAM 19013 / LMG 5710 / NBRC 13948 / NRRL B-527 / VKM B-1787 / 2291 / W).